A 558-amino-acid chain; its full sequence is V-set and immunoglobulin domain-containing protein 10 (558 aa).

Positions 1–20 (MAGLRVLLCLGALLARQGSA) are cleaved as a signal peptide. At 21–426 (GLQLLLNPSR…IWLSVKEPLN (406 aa)) the chain is on the extracellular side. N32, N60, N121, N150, N159, and N218 each carry an N-linked (GlcNAc...) asparagine glycan. Ig-like C2-type domains lie at 37–140 (PNSE…RLRV), 144–235 (PAYV…RKVT), 248–327 (PQCS…VKLS), and 332–420 (PSQP…IWLS). Cysteines 65 and 124 form a disulfide. 2 disulfides stabilise this stretch: C174-C221 and C265-C308. A glycan (N-linked (GlcNAc...) asparagine) is linked at N344. An intrachain disulfide couples C349 to C404. A helical membrane pass occupies residues 427 to 447 (IGGIVGTVVSLLLLGLAVVSG). Over 448-558 (LTLYYSPAFW…GIVQEDGKPV (111 aa)) the chain is Cytoplasmic. Residues 477–506 (DSEEEEEEEEEEEEKEDVAEEVEQETNETE) show a composition bias toward acidic residues. 2 disordered regions span residues 477–515 (DSEE…ISKH) and 532–558 (MGNG…GKPV).

The protein resides in the membrane. This is V-set and immunoglobulin domain-containing protein 10 (Vsig10) from Mus musculus (Mouse).